We begin with the raw amino-acid sequence, 311 residues long: tRNA-cytidine(32) 2-sulfurtransferase (311 aa).

The PP-loop motif signature appears at 47–52 (SGGKDS). The [4Fe-4S] cluster site is built by cysteine 122, cysteine 125, and cysteine 213.

Belongs to the TtcA family. Homodimer. The cofactor is Mg(2+). [4Fe-4S] cluster is required as a cofactor.

Its subcellular location is the cytoplasm. It carries out the reaction cytidine(32) in tRNA + S-sulfanyl-L-cysteinyl-[cysteine desulfurase] + AH2 + ATP = 2-thiocytidine(32) in tRNA + L-cysteinyl-[cysteine desulfurase] + A + AMP + diphosphate + H(+). The protein operates within tRNA modification. In terms of biological role, catalyzes the ATP-dependent 2-thiolation of cytidine in position 32 of tRNA, to form 2-thiocytidine (s(2)C32). The sulfur atoms are provided by the cysteine/cysteine desulfurase (IscS) system. This Shigella flexneri serotype 5b (strain 8401) protein is tRNA-cytidine(32) 2-sulfurtransferase.